A 491-amino-acid polypeptide reads, in one-letter code: Monothiol glutaredoxin-S11 (491 aa).

3 Glutaredoxin domains span residues 151–253 (NKRL…NIPL), 287–389 (KERL…GIVA), and 394–491 (EDRL…TLSE). Lysine 411 is a binding site for glutathione. Cysteine 419 is a binding site for [2Fe-2S] cluster. Residues arginine 448, phenylalanine 460, and 473-474 (CD) contribute to the glutathione site.

This sequence belongs to the glutaredoxin family. CGFS subfamily.

It is found in the cytoplasm. In terms of biological role, may only reduce GSH-thiol disulfides, but not protein disulfides. In Oryza sativa subsp. japonica (Rice), this protein is Monothiol glutaredoxin-S11 (GRXS11).